Reading from the N-terminus, the 177-residue chain is ATP synthase subunit delta (177 aa).

It belongs to the ATPase delta chain family. As to quaternary structure, F-type ATPases have 2 components, F(1) - the catalytic core - and F(0) - the membrane proton channel. F(1) has five subunits: alpha(3), beta(3), gamma(1), delta(1), epsilon(1). F(0) has three main subunits: a(1), b(2) and c(10-14). The alpha and beta chains form an alternating ring which encloses part of the gamma chain. F(1) is attached to F(0) by a central stalk formed by the gamma and epsilon chains, while a peripheral stalk is formed by the delta and b chains.

The protein localises to the cell inner membrane. Its function is as follows. F(1)F(0) ATP synthase produces ATP from ADP in the presence of a proton or sodium gradient. F-type ATPases consist of two structural domains, F(1) containing the extramembraneous catalytic core and F(0) containing the membrane proton channel, linked together by a central stalk and a peripheral stalk. During catalysis, ATP synthesis in the catalytic domain of F(1) is coupled via a rotary mechanism of the central stalk subunits to proton translocation. This protein is part of the stalk that links CF(0) to CF(1). It either transmits conformational changes from CF(0) to CF(1) or is implicated in proton conduction. The polypeptide is ATP synthase subunit delta (Shigella flexneri).